A 244-amino-acid polypeptide reads, in one-letter code: Phosphoadenosine 5'-phosphosulfate reductase (244 aa).

The active-site Nucleophile; cysteine thiosulfonate intermediate is Cys239.

It belongs to the PAPS reductase family. CysH subfamily.

It is found in the cytoplasm. The enzyme catalyses [thioredoxin]-disulfide + sulfite + adenosine 3',5'-bisphosphate + 2 H(+) = [thioredoxin]-dithiol + 3'-phosphoadenylyl sulfate. It participates in sulfur metabolism; hydrogen sulfide biosynthesis; sulfite from sulfate: step 3/3. Its function is as follows. Catalyzes the formation of sulfite from phosphoadenosine 5'-phosphosulfate (PAPS) using thioredoxin as an electron donor. The sequence is that of Phosphoadenosine 5'-phosphosulfate reductase from Shigella flexneri serotype 5b (strain 8401).